A 413-amino-acid polypeptide reads, in one-letter code: Protein arginine N-methyltransferase 2 (413 aa).

Disordered stretches follow at residues 65-85 (DDEEPNGVQTNGEQGDEQKSV) and 148-178 (ELEDDDEEEEEGQEEQTGTEEVEVEGESAPQ). Acidic residues predominate over residues 148-173 (ELEDDDEEEEEGQEEQTGTEEVEVEG). Residues 192–413 (TGPDVTNSRY…YRLPLCKYMD (222 aa)) form the RMT2 domain. S-adenosyl-L-methionine is bound by residues Tyr201, Met230, 250-255 (HGMGIV), 271-273 (EAH), 298-299 (WQ), and Asp318.

This sequence belongs to the class I-like SAM-binding methyltransferase superfamily. RMT2 methyltransferase family. Monomer.

The protein localises to the cytoplasm. It localises to the nucleus. Functionally, S-adenosyl-L-methionine-dependent protein-arginine N-methyltransferase that methylates the delta-nitrogen atom of arginine residues to form N5-methylarginine (type IV) in target proteins. Monomethylates ribosomal protein L12. The sequence is that of Protein arginine N-methyltransferase 2 from Aspergillus oryzae (strain ATCC 42149 / RIB 40) (Yellow koji mold).